We begin with the raw amino-acid sequence, 204 residues long: MVAEISPLLKFVLELGPLMVFFFANSRGEWLASTFPVLTEFGGPIFIATGLFMIATATALTVSWILTRKLPIMPLISGIVVFVFGALTLWLQNDTFIKMKPTIVNTLFGVILLGGLFFGQSLLGYVFNSAFKLTDEGWRKLTLRWGVFFLFLAVLNEVVWRMFTTDTWVAFKVWGTMPITIIFTMAQMPFVMRHSVEPLGKDEK.

6 helical membrane-spanning segments follow: residues 3–23 (AEISPLLKFVLELGPLMVFFF), 45–65 (IFIATGLFMIATATALTVSWI), 70–90 (LPIMPLISGIVVFVFGALTLW), 107–127 (LFGVILLGGLFFGQSLLGYVF), 145–165 (WGVFFLFLAVLNEVVWRMFTT), and 168–188 (WVAFKVWGTMPITIIFTMAQM).

It belongs to the YciB family.

It localises to the cell inner membrane. In terms of biological role, plays a role in cell envelope biogenesis, maintenance of cell envelope integrity and membrane homeostasis. The chain is Inner membrane-spanning protein YciB from Agrobacterium fabrum (strain C58 / ATCC 33970) (Agrobacterium tumefaciens (strain C58)).